Here is a 932-residue protein sequence, read N- to C-terminus: DNA mismatch repair protein MutS (932 aa).

620–627 (GPNMAGKS) contacts ATP.

This sequence belongs to the DNA mismatch repair MutS family.

In terms of biological role, this protein is involved in the repair of mismatches in DNA. It is possible that it carries out the mismatch recognition step. This protein has a weak ATPase activity. The protein is DNA mismatch repair protein MutS of Lachnoclostridium phytofermentans (strain ATCC 700394 / DSM 18823 / ISDg) (Clostridium phytofermentans).